Reading from the N-terminus, the 80-residue chain is Trefoil factor 3 (80 aa).

A signal peptide spans 1-21; the sequence is MEARMFWLLVVLLALASSSSA. The 44-residue stretch at 30–73 folds into the P-type domain; sequence NQCAVPAKDRVDCGYPQVTPEQCNNRGCCFDSSIXGVPWCFKPL. 3 disulfide bridges follow: Cys32–Cys58, Cys42–Cys57, and Cys52–Cys69.

Monomer. Homodimer; disulfide-linked.

The protein localises to the secreted. The protein resides in the extracellular space. It localises to the extracellular matrix. It is found in the cytoplasm. In terms of biological role, involved in the maintenance and repair of the intestinal mucosa. Promotes the mobility of epithelial cells in healing processes (motogen). In Sus scrofa (Pig), this protein is Trefoil factor 3 (TFF3).